Reading from the N-terminus, the 1252-residue chain is Protein ITPRID2 (1252 aa).

The tract at residues 28-70 (CRSSWQASETEDLSTETTTQDEDEDDEEDLPGTKLPAPAGRGN) is disordered. Residues 36-57 (ETEDLSTETTTQDEDEDDEEDL) show a composition bias toward acidic residues. At Thr85 the chain carries Phosphothreonine. Phosphoserine occurs at positions 90, 109, 207, 268, and 328. Disordered stretches follow at residues 306–483 (DKTE…HVPA), 552–575 (HVTPTAQDQPYFNESEEESLAPLQ), and 595–636 (FPQC…GELP). Positions 357 to 372 (TVTEEVSGSSSTVTDS) are enriched in low complexity. 2 stretches are compositionally biased toward basic and acidic residues: residues 395–407 (SREAHSQEKDPLR) and 415–428 (DLGHDGRVSSHCEL). Positions 429–441 (ESSSELKSAQASS) are enriched in low complexity. Ser465 is modified (phosphoserine). Residues Ser643, Ser667, Ser736, Ser738, Ser745, Ser758, and Ser766 each carry the phosphoserine modification. Lys807 is covalently cross-linked (Glycyl lysine isopeptide (Lys-Gly) (interchain with G-Cter in SUMO2)). 2 positions are modified to phosphoserine: Ser866 and Ser898. A coiled-coil region spans residues 955 to 1031 (QELQVVRRSL…LLGLDEQLRA (77 aa)). 5 positions are modified to phosphoserine: Ser1036, Ser1051, Ser1056, Ser1059, and Ser1114. Disordered regions lie at residues 1095–1131 (GESSESVFSQATSESSSVCSSPSHTNRRSRGLPGSKP) and 1147–1180 (ALTPTAPSRTGSVQTPPDLESSEEAGGAEEASPV). Low complexity predominate over residues 1103–1117 (SQATSESSSVCSSPS). At Thr1149 the chain carries Phosphothreonine. Over residues 1151–1161 (TAPSRTGSVQT) the composition is skewed to polar residues. Ser1154 is subject to Phosphoserine. A Phosphothreonine modification is found at Thr1161.

The protein resides in the cytoplasm. The sequence is that of Protein ITPRID2 (Itprid2) from Mus musculus (Mouse).